The sequence spans 237 residues: tRNA1(Val) (adenine(37)-N6)-methyltransferase (237 aa).

This sequence belongs to the methyltransferase superfamily. tRNA (adenine-N(6)-)-methyltransferase family.

The protein resides in the cytoplasm. It catalyses the reaction adenosine(37) in tRNA1(Val) + S-adenosyl-L-methionine = N(6)-methyladenosine(37) in tRNA1(Val) + S-adenosyl-L-homocysteine + H(+). In terms of biological role, specifically methylates the adenine in position 37 of tRNA(1)(Val) (anticodon cmo5UAC). The polypeptide is tRNA1(Val) (adenine(37)-N6)-methyltransferase (Bacteroides fragilis (strain ATCC 25285 / DSM 2151 / CCUG 4856 / JCM 11019 / LMG 10263 / NCTC 9343 / Onslow / VPI 2553 / EN-2)).